The chain runs to 629 residues: tRNA uridine 5-carboxymethylaminomethyl modification enzyme MnmG (629 aa).

FAD is bound by residues 14–19 (GAGHAG), V126, and S181. 273-287 (GPRYCPSIEDKVVRF) provides a ligand contact to NAD(+). Q370 is a binding site for FAD.

The protein belongs to the MnmG family. As to quaternary structure, homodimer. Heterotetramer of two MnmE and two MnmG subunits. The cofactor is FAD.

It localises to the cytoplasm. Functionally, NAD-binding protein involved in the addition of a carboxymethylaminomethyl (cmnm) group at the wobble position (U34) of certain tRNAs, forming tRNA-cmnm(5)s(2)U34. This chain is tRNA uridine 5-carboxymethylaminomethyl modification enzyme MnmG, found in Bacillus thuringiensis (strain Al Hakam).